A 246-amino-acid polypeptide reads, in one-letter code: Trypsin V-B (246 aa).

An N-terminal signal peptide occupies residues 1–15 (MKICIFFTLLGTVAA). A propeptide spans 16–24 (FPTEDNDDR) (activation peptide). Positions 25 to 244 (IVGGYTCQEH…YLNWIQQTVA (220 aa)) constitute a Peptidase S1 domain. Cystine bridges form between Cys31-Cys160, Cys49-Cys65, Cys133-Cys233, Cys140-Cys206, Cys171-Cys185, and Cys196-Cys220. The active-site Charge relay system is His64. 3 residues coordinate Ca(2+): Glu76, Asn78, and Glu86. Asp108 acts as the Charge relay system in catalysis. The active-site Charge relay system is Ser200.

The protein belongs to the peptidase S1 family. Ca(2+) serves as cofactor.

It localises to the secreted. The protein resides in the extracellular space. It carries out the reaction Preferential cleavage: Arg-|-Xaa, Lys-|-Xaa.. This Rattus norvegicus (Rat) protein is Trypsin V-B.